Consider the following 249-residue polypeptide: tRNA pseudouridine synthase A (249 aa).

The active-site Nucleophile is the Asp-52. Tyr-111 is a binding site for substrate.

It belongs to the tRNA pseudouridine synthase TruA family. In terms of assembly, homodimer.

The enzyme catalyses uridine(38/39/40) in tRNA = pseudouridine(38/39/40) in tRNA. Its function is as follows. Formation of pseudouridine at positions 38, 39 and 40 in the anticodon stem and loop of transfer RNAs. The polypeptide is tRNA pseudouridine synthase A (Maricaulis maris (strain MCS10) (Caulobacter maris)).